Reading from the N-terminus, the 83-residue chain is MKTSMFLTLTGLVLLFVVCYASESEEKEFPKELLSSIFAADSDFKVEERGCLGDKCDYNNGCCSGYVCSRTWKWCVLAGPWCR.

The signal sequence occupies residues 1–21 (MKTSMFLTLTGLVLLFVVCYA). The propeptide occupies 22-49 (SESEEKEFPKELLSSIFAADSDFKVEER). 3 disulfide bridges follow: cysteine 51/cysteine 63, cysteine 56/cysteine 68, and cysteine 62/cysteine 75.

Belongs to the neurotoxin 10 (Hwtx-1) family. 51 (Hntx-8) subfamily. Hntx-8 sub-subfamily. As to expression, expressed by the venom gland.

The protein resides in the secreted. Agglutinates erythrocytes. The sequence is that of U5-theraphotoxin-Hs1c from Cyriopagopus schmidti (Chinese bird spider).